Here is a 93-residue protein sequence, read N- to C-terminus: DNA/RNA-binding protein Alba 2 (93 aa).

Belongs to the histone-like Alba family.

The protein localises to the cytoplasm. It is found in the chromosome. Its function is as follows. Binds double-stranded DNA tightly but without sequence specificity. Involved in DNA compaction. This Methanopyrus kandleri (strain AV19 / DSM 6324 / JCM 9639 / NBRC 100938) protein is DNA/RNA-binding protein Alba 2.